The sequence spans 211 residues: NADH-quinone oxidoreductase subunit C (211 aa).

Belongs to the complex I 30 kDa subunit family. As to quaternary structure, NDH-1 is composed of 14 different subunits. Subunits NuoB, C, D, E, F, and G constitute the peripheral sector of the complex.

The protein localises to the cell inner membrane. It catalyses the reaction a quinone + NADH + 5 H(+)(in) = a quinol + NAD(+) + 4 H(+)(out). Its function is as follows. NDH-1 shuttles electrons from NADH, via FMN and iron-sulfur (Fe-S) centers, to quinones in the respiratory chain. The immediate electron acceptor for the enzyme in this species is believed to be ubiquinone. Couples the redox reaction to proton translocation (for every two electrons transferred, four hydrogen ions are translocated across the cytoplasmic membrane), and thus conserves the redox energy in a proton gradient. This Azorhizobium caulinodans (strain ATCC 43989 / DSM 5975 / JCM 20966 / LMG 6465 / NBRC 14845 / NCIMB 13405 / ORS 571) protein is NADH-quinone oxidoreductase subunit C.